A 385-amino-acid polypeptide reads, in one-letter code: Rhomboid domain-containing protein 3 (385 aa).

A run of 5 helical transmembrane segments spans residues 13-33 (ALPLASSVLMLLLSCLWLLGA), 58-78 (LGHTALPGLLLSLLLLPTLGW), 95-115 (VLALATGLLAVLLAGLGVSGA), 146-166 (WLLPWLLLALTLLLSSEPPFL), and 168-188 (LLCGLLTGLAYAAGAFQWLEL). Residues 238–264 (PPYLASSDSWPHSDGSAQLPPRLGPGQ) form a disordered region. A UBA domain is found at 322 to 361 (SVSSLRLQQLQHMGFPTEQAAVALAATGRVEGAVSLLVEG).

Its subcellular location is the membrane. The protein is Rhomboid domain-containing protein 3 (Rhbdd3) of Mus musculus (Mouse).